Consider the following 1033-residue polypeptide: Probable beta-glucosidase E (1033 aa).

The segment at 1–71 (MAPPDSTHGG…RSGSYKLRPV (71 aa)) is disordered. Over 1 to 161 (MAPPDSTHGG…PVKYARIWWR (161 aa)) the chain is Cytoplasmic. Basic and acidic residues-rich tracts occupy residues 11–20 (SFRDHLKTND) and 59–71 (DLER…LRPV). Residues 162-182 (TLLAVVVTLVVVVWGFLSFAV) traverse the membrane as a helical; Signal-anchor for type II membrane protein segment. Residues 183–1033 (SHREEPTVWP…SRDLPLMGEY (851 aa)) lie on the Extracellular side of the membrane. N-linked (GlcNAc...) asparagine glycosylation is found at Asn224, Asn232, and Asn418. Residue Asp446 is part of the active site. N-linked (GlcNAc...) asparagine glycans are attached at residues Asn489, Asn528, Asn593, Asn909, Asn918, and Asn976.

This sequence belongs to the glycosyl hydrolase 3 family.

It is found in the cell membrane. It catalyses the reaction Hydrolysis of terminal, non-reducing beta-D-glucosyl residues with release of beta-D-glucose.. The protein operates within glycan metabolism; cellulose degradation. In terms of biological role, beta-glucosidases are one of a number of cellulolytic enzymes involved in the degradation of cellulosic biomass. Catalyzes the last step releasing glucose from the inhibitory cellobiose. The chain is Probable beta-glucosidase E (bglE) from Aspergillus fumigatus (strain CBS 144.89 / FGSC A1163 / CEA10) (Neosartorya fumigata).